The sequence spans 452 residues: Bifunctional protein GlmU (452 aa).

The segment at 1-226 is pyrophosphorylase; the sequence is MSLHIIILAA…LHEVEGVNNR (226 aa). UDP-N-acetyl-alpha-D-glucosamine contacts are provided by residues 8-11, Lys-22, Gln-73, 78-79, 100-102, Gly-136, Glu-151, Asn-166, and Asn-224; these read LAAG, GT, and YGD. Asp-102 provides a ligand contact to Mg(2+). Asn-224 serves as a coordination point for Mg(2+). The linker stretch occupies residues 227–247; it reads IQLAALERAYQQQVAEELMLA. The tract at residues 248 to 452 is N-acetyltransferase; sequence GATLRDPARV…IDGWTRPVKK (205 aa). Residues Arg-330 and Lys-348 each coordinate UDP-N-acetyl-alpha-D-glucosamine. His-360 acts as the Proton acceptor in catalysis. UDP-N-acetyl-alpha-D-glucosamine is bound by residues Tyr-363 and Asn-374. Acetyl-CoA contacts are provided by residues Ala-377, 383-384, Ser-402, Ala-420, and Arg-437; that span reads NY.

The protein in the N-terminal section; belongs to the N-acetylglucosamine-1-phosphate uridyltransferase family. In the C-terminal section; belongs to the transferase hexapeptide repeat family. In terms of assembly, homotrimer. Mg(2+) is required as a cofactor.

It is found in the cytoplasm. It carries out the reaction alpha-D-glucosamine 1-phosphate + acetyl-CoA = N-acetyl-alpha-D-glucosamine 1-phosphate + CoA + H(+). It catalyses the reaction N-acetyl-alpha-D-glucosamine 1-phosphate + UTP + H(+) = UDP-N-acetyl-alpha-D-glucosamine + diphosphate. The protein operates within nucleotide-sugar biosynthesis; UDP-N-acetyl-alpha-D-glucosamine biosynthesis; N-acetyl-alpha-D-glucosamine 1-phosphate from alpha-D-glucosamine 6-phosphate (route II): step 2/2. Its pathway is nucleotide-sugar biosynthesis; UDP-N-acetyl-alpha-D-glucosamine biosynthesis; UDP-N-acetyl-alpha-D-glucosamine from N-acetyl-alpha-D-glucosamine 1-phosphate: step 1/1. It functions in the pathway bacterial outer membrane biogenesis; LPS lipid A biosynthesis. Catalyzes the last two sequential reactions in the de novo biosynthetic pathway for UDP-N-acetylglucosamine (UDP-GlcNAc). The C-terminal domain catalyzes the transfer of acetyl group from acetyl coenzyme A to glucosamine-1-phosphate (GlcN-1-P) to produce N-acetylglucosamine-1-phosphate (GlcNAc-1-P), which is converted into UDP-GlcNAc by the transfer of uridine 5-monophosphate (from uridine 5-triphosphate), a reaction catalyzed by the N-terminal domain. The polypeptide is Bifunctional protein GlmU (Hahella chejuensis (strain KCTC 2396)).